The sequence spans 166 residues: UPF0304 protein VC_1871 (166 aa).

This sequence belongs to the UPF0304 family.

In Vibrio cholerae serotype O1 (strain ATCC 39315 / El Tor Inaba N16961), this protein is UPF0304 protein VC_1871.